Reading from the N-terminus, the 225-residue chain is Heptaprenylglyceryl phosphate synthase (225 aa).

Lys6 contributes to the sn-glycerol 1-phosphate binding site. Positions 8 and 34 each coordinate Mg(2+). Sn-glycerol 1-phosphate contacts are provided by residues 153–158, Gly183, and 203–204; these read YIEYSG and GN.

It belongs to the GGGP/HepGP synthase family. Group I subfamily. As to quaternary structure, homodimer. Requires Mg(2+) as cofactor.

The enzyme catalyses sn-glycerol 1-phosphate + all-trans-heptaprenyl diphosphate = 3-heptaprenyl-sn-glycero-1-phosphate + diphosphate. Its pathway is membrane lipid metabolism; glycerophospholipid metabolism. In terms of biological role, prenyltransferase that catalyzes in vivo the transfer of the heptaprenyl moiety of heptaprenyl pyrophosphate (HepPP; 35 carbon atoms) to the C3 hydroxyl of sn-glycerol-1-phosphate (G1P), producing heptaprenylglyceryl phosphate (HepGP). This reaction is an ether-bond-formation step in the biosynthesis of archaea-type G1P-based membrane lipids found in Bacillales. The chain is Heptaprenylglyceryl phosphate synthase from Listeria welshimeri serovar 6b (strain ATCC 35897 / DSM 20650 / CCUG 15529 / CIP 8149 / NCTC 11857 / SLCC 5334 / V8).